The primary structure comprises 390 residues: Formate-dependent phosphoribosylglycinamide formyltransferase (390 aa).

N(1)-(5-phospho-beta-D-ribosyl)glycinamide contacts are provided by residues 18-19 and E78; that span reads EL. ATP contacts are provided by residues R110, K151, 156–161, 191–194, and E199; these read SSGKGQ and EEFL. Residues 115-305 enclose the ATP-grasp domain; the sequence is DLASKELNIK…EFELHLRAFL (191 aa). Mg(2+)-binding residues include E264 and E276. Residues D283, K353, and 360–361 contribute to the N(1)-(5-phospho-beta-D-ribosyl)glycinamide site; that span reads RR.

The protein belongs to the PurK/PurT family. In terms of assembly, homodimer.

It carries out the reaction N(1)-(5-phospho-beta-D-ribosyl)glycinamide + formate + ATP = N(2)-formyl-N(1)-(5-phospho-beta-D-ribosyl)glycinamide + ADP + phosphate + H(+). It participates in purine metabolism; IMP biosynthesis via de novo pathway; N(2)-formyl-N(1)-(5-phospho-D-ribosyl)glycinamide from N(1)-(5-phospho-D-ribosyl)glycinamide (formate route): step 1/1. In terms of biological role, involved in the de novo purine biosynthesis. Catalyzes the transfer of formate to 5-phospho-ribosyl-glycinamide (GAR), producing 5-phospho-ribosyl-N-formylglycinamide (FGAR). Formate is provided by PurU via hydrolysis of 10-formyl-tetrahydrofolate. This Prochlorococcus marinus (strain MIT 9515) protein is Formate-dependent phosphoribosylglycinamide formyltransferase.